The primary structure comprises 779 residues: MEMDVTRDTVEVLPQHKFDIRSLEAYLNQHLPGFGSDHRAVLTVTQYRSGQSNPTFFLQKGSQAYVLRKKPPGSLLPKAHKIDREFKVQKALFSVGFPVPKPLLYCSNASIIGTEFYVMEHVQGRIFRDFSIPGVSPAERAAIYVSLVETLAWLHSLDIHSLGLDRYGTGVGYCKRQVSTWTKQYQASAHQSIPAMDQLSTWLMRNLPDSDNEECLVHGDFKLDNIVFHPKECRVIAVLDWELSTFGHPLSDLAHLSLFYFWPRTLPMINRGSHIQENTGIPLMEELISIYCRRRGIDPNLPNWNFFMALSFFKLAGIAQGVYSRYLMGNNSSEDSFLTANTVQPLAETGLQLSRRTLSTVPPQADAKSRLFAQSRRGQEVLTRVKQFMKQHVFPAEKEVAEYYAQNGNSAEKWEHPLVIEKLKEMAKAEGLWNLFLPAVSGLSQVDYALIAEETGKCFFAPDVFNCQAPDTGNMEVLHLYGSEQQKQQWLEPLLRGDITSVFCMTEPNVSSSDATNMECSIQRDGGSYIVHGKKWWSSGAGNPKCKIAVVLGRTESPSVSRHKVHSMILVPMDTPGVELIRPLSVFGYMDNVHGGHWEVHFNHVRVPASNLILGEGRGFEISQGRLGPGRIHHCMRSVGLAERILQIMCDRAVQREAFGKKLYEHEVVAHWIAKSRIAIEEIRLLTLKAAHSIDTLGSAAARKEIAMIKVAAPKAVCKIADRAIQVHGGAGVSQDYPLANMYAIIRTLRLADGPDEVHLSAIAKMELQDQARQLKARM.

Lysine 175 is subject to N6-acetyllysine. A Phosphoserine modification is found at serine 210. Residue tyrosine 323 is modified to Phosphotyrosine. Lysine 368 and lysine 390 each carry N6-succinyllysine. FAD-binding positions include 503–513 (FCMTEPNVSSS), 511–513 (SSS), 537–539 (WSS), and serine 539. Residue serine 513 coordinates substrate. 628-631 (GPGR) is a binding site for substrate. Residues arginine 656, glutamine 726, and 726–730 (QVHGG) contribute to the FAD site. Substrate is bound at residue glycine 754. Residues 755-757 (PDE) and glutamate 757 contribute to the FAD site. Residue lysine 765 is modified to N6-acetyllysine.

Belongs to the acyl-CoA dehydrogenase family. As to quaternary structure, homodimer. FAD is required as a cofactor.

The protein localises to the peroxisome. It is found in the mitochondrion membrane. The enzyme catalyses a 2,3-saturated acyl-CoA + oxidized [electron-transfer flavoprotein] + H(+) = a (2E)-enoyl-CoA + reduced [electron-transfer flavoprotein]. It carries out the reaction docosanoyl-CoA + oxidized [electron-transfer flavoprotein] + H(+) = (2E)-docosenoyl-CoA + reduced [electron-transfer flavoprotein]. It catalyses the reaction tetracosanoyl-CoA + oxidized [electron-transfer flavoprotein] + H(+) = (2E)-tetracosenoyl-CoA + reduced [electron-transfer flavoprotein]. The catalysed reaction is eicosanoyl-CoA + oxidized [electron-transfer flavoprotein] + H(+) = (2E)-eicosenoyl-CoA + reduced [electron-transfer flavoprotein]. The enzyme catalyses hexacosanoyl-CoA + oxidized [electron-transfer flavoprotein] + H(+) = (2E)-hexacosenoyl-CoA + reduced [electron-transfer flavoprotein]. It carries out the reaction tricosanoyl-CoA + oxidized [electron-transfer flavoprotein] + H(+) = (2E)-tricosenoyl-CoA + reduced [electron-transfer flavoprotein]. The protein operates within lipid metabolism; fatty acid beta-oxidation. Its function is as follows. Acyl-CoA dehydrogenase, that exhibits maximal activity towards saturated C22-CoA. Probably participates in beta-oxydation and energy production but could also play a role in the metabolism of specific fatty acids to control fatty acids composition of cellular lipids in brain. The chain is Acyl-CoA dehydrogenase family member 11 (Acad11) from Rattus norvegicus (Rat).